Consider the following 848-residue polypeptide: Paramyosin (848 aa).

Positions Ala-1–Asp-9 are nonhelical region. A coiled-coil region spans residues Leu-10 to Ser-833. The nonhelical region stretch occupies residues Val-834–Leu-848.

This sequence belongs to the paramyosin family. In terms of assembly, homodimer.

It is found in the cytoplasm. The protein localises to the myofibril. In terms of biological role, paramyosin is a major structural component of many thick filaments isolated from invertebrate muscles. The polypeptide is Paramyosin (Dirofilaria immitis (Canine heartworm)).